Consider the following 133-residue polypeptide: Ribosome-binding factor A (133 aa).

This sequence belongs to the RbfA family. In terms of assembly, monomer. Binds 30S ribosomal subunits, but not 50S ribosomal subunits or 70S ribosomes.

It localises to the cytoplasm. Functionally, one of several proteins that assist in the late maturation steps of the functional core of the 30S ribosomal subunit. Associates with free 30S ribosomal subunits (but not with 30S subunits that are part of 70S ribosomes or polysomes). Required for efficient processing of 16S rRNA. May interact with the 5'-terminal helix region of 16S rRNA. In Psychromonas ingrahamii (strain DSM 17664 / CCUG 51855 / 37), this protein is Ribosome-binding factor A.